A 128-amino-acid chain; its full sequence is UPF0102 protein Rfer_3873 (128 aa).

Positions 1-15 (MAIPQIKTQVGTSKQ) are enriched in polar residues. The segment at 1–20 (MAIPQIKTQVGTSKQAGDAA) is disordered.

It belongs to the UPF0102 family.

This Albidiferax ferrireducens (strain ATCC BAA-621 / DSM 15236 / T118) (Rhodoferax ferrireducens) protein is UPF0102 protein Rfer_3873.